The chain runs to 407 residues: Methylthioribose-1-phosphate isomerase (407 aa).

Aspartate 275 functions as the Proton donor in the catalytic mechanism.

The protein belongs to the eIF-2B alpha/beta/delta subunits family. MtnA subfamily.

It localises to the cytoplasm. The protein localises to the nucleus. The catalysed reaction is 5-(methylsulfanyl)-alpha-D-ribose 1-phosphate = 5-(methylsulfanyl)-D-ribulose 1-phosphate. It functions in the pathway amino-acid biosynthesis; L-methionine biosynthesis via salvage pathway; L-methionine from S-methyl-5-thio-alpha-D-ribose 1-phosphate: step 1/6. Functionally, catalyzes the interconversion of methylthioribose-1-phosphate (MTR-1-P) into methylthioribulose-1-phosphate (MTRu-1-P). This Kluyveromyces lactis (strain ATCC 8585 / CBS 2359 / DSM 70799 / NBRC 1267 / NRRL Y-1140 / WM37) (Yeast) protein is Methylthioribose-1-phosphate isomerase.